We begin with the raw amino-acid sequence, 264 residues long: Thiazole synthase (264 aa).

The Schiff-base intermediate with DXP role is filled by K98. 1-deoxy-D-xylulose 5-phosphate-binding positions include G159, 185-186 (AG), and 207-208 (AT).

The protein belongs to the ThiG family. As to quaternary structure, homotetramer. Forms heterodimers with either ThiH or ThiS.

It localises to the cytoplasm. It carries out the reaction [ThiS sulfur-carrier protein]-C-terminal-Gly-aminoethanethioate + 2-iminoacetate + 1-deoxy-D-xylulose 5-phosphate = [ThiS sulfur-carrier protein]-C-terminal Gly-Gly + 2-[(2R,5Z)-2-carboxy-4-methylthiazol-5(2H)-ylidene]ethyl phosphate + 2 H2O + H(+). It functions in the pathway cofactor biosynthesis; thiamine diphosphate biosynthesis. In terms of biological role, catalyzes the rearrangement of 1-deoxy-D-xylulose 5-phosphate (DXP) to produce the thiazole phosphate moiety of thiamine. Sulfur is provided by the thiocarboxylate moiety of the carrier protein ThiS. In vitro, sulfur can be provided by H(2)S. The protein is Thiazole synthase of Mycobacterium ulcerans (strain Agy99).